A 563-amino-acid polypeptide reads, in one-letter code: Tripeptidyl-peptidase 1 (563 aa).

Positions 1–19 (MGPRSGLLGLFALFVAGKC) are cleaved as a signal peptide. The propeptide at 20-195 (SYSPEPDQQR…PEPQVPGTVG (176 aa)) is removed in mature form. Residues Cys-111 and Cys-122 are joined by a disulfide bond. Residues 199–563 (GVTPSVIRKR…PALLKTLMNP (365 aa)) enclose the Peptidase S53 domain. N-linked (GlcNAc...) asparagine glycans are attached at residues Asn-210 and Asn-222. Residues Glu-272 and Asp-276 each act as charge relay system in the active site. Residues Asn-286, Asn-313, and Asn-443 are each glycosylated (N-linked (GlcNAc...) asparagine). Disulfide bonds link Cys-365-Cys-526 and Cys-522-Cys-537. Ser-475 functions as the Charge relay system in the catalytic mechanism. 2 residues coordinate Ca(2+): Asp-517 and Val-518. Residues Gly-539, Gly-541, and Asp-543 each coordinate Ca(2+).

In terms of assembly, monomer. Interacts with CLN5. Interacts with CLN3. Requires Ca(2+) as cofactor. Post-translationally, activated by autocatalytic proteolytical processing upon acidification. N-glycosylation is required for processing and activity.

The protein resides in the lysosome. The protein localises to the melanosome. It catalyses the reaction Release of an N-terminal tripeptide from a polypeptide, but also has endopeptidase activity.. Its function is as follows. Lysosomal serine protease with tripeptidyl-peptidase I activity. May act as a non-specific lysosomal peptidase which generates tripeptides from the breakdown products produced by lysosomal proteinases. Requires substrates with an unsubstituted N-terminus. The protein is Tripeptidyl-peptidase 1 (TPP1) of Bos taurus (Bovine).